The following is a 1088-amino-acid chain: Insulin receptor substrate 1-B (1088 aa).

The PH domain occupies 15–117; the sequence is DVRKVGYLRK…WYQALVDLHN (103 aa). Residue Y48 is modified to Phosphotyrosine. In terms of domain architecture, IRS-type PTB spans 155-259; that stretch reads FKEVWQVIMK…EAMKALSDEF (105 aa). The tract at residues 259–428 is disordered; that stretch reads FRPRSKSQSS…GGFISSDEYG (170 aa). Low complexity-rich tracts occupy residues 264 to 278, 302 to 312, 379 to 400, and 408 to 420; these read KSQS…ISVP, SATATSPAGGA, SPSA…GSTS, and SSAS…SDGG. Residue S307 is modified to Phosphoserine. At Y460 the chain carries Phosphotyrosine; by INSR. The short motif at 460 to 463 is the YXXM motif 1 element; it reads YICM. Composition is skewed to polar residues over residues 466–479 and 499–516; these read SSSH…QRYQ and SSGT…PSQS. Disordered regions lie at residues 466–485 and 496–516; these read SSSH…RGEE and RTHS…PSQS. Short sequence motifs (YXXM motif) lie at residues 521–524, 567–570, 584–587, 612–615, and 654–657; these read YTEM, YMPM, YMMM, and YINM. Residues Y567 and Y584 each carry the phosphotyrosine; by INSR modification. Y612 is modified (phosphotyrosine). The tract at residues 704 to 785 is disordered; it reads NLRISANSGH…PPEPKSPGEY (82 aa). Residues 707–718 show a composition bias toward polar residues; the sequence is ISANSGHNLYTE. Low complexity predominate over residues 719–729; sequence DSSSSSTSSDS. 2 positions are modified to phosphotyrosine; by INSR: Y785 and Y823. The GRB2-binding stretch occupies residues 785-787; that stretch reads YVN. Residues 823 to 826 carry the YXXM motif 7 motif; it reads YMNM. Positions 840–863 are enriched in polar residues; that stretch reads TSSYEPPNKPVNSVCPTETCSSSR. The tract at residues 840–868 is disordered; the sequence is TSSYEPPNKPVNSVCPTETCSSSRPPIRG. Y875 is subject to Phosphotyrosine; by INSR. 2 consecutive short sequence motifs (YXXM motif) follow at residues 875-878 and 909-912; these read YMSM and YAEM. The disordered stretch occupies residues 935 to 1006; the sequence is ASRSSLLGQG…SGEDVKRHSS (72 aa). Composition is skewed to polar residues over residues 946-961 and 980-995; these read GPSA…NRNP and ETFS…TTGP. 2 positions are modified to phosphotyrosine; by INSR: Y1037 and Y1069.

In terms of assembly, interacts with the NPXY motif of tyrosine-phosphorylated igf1r and insr via the PTB domain. Binds to phosphatidylinositol 3-kinase p85 subunit at a low level in vitro prior to phosphorylation. Binding is greatly enhanced following tyrosine phosphorylation by insr and probably occurs via the phosphorylated YXXM motifs. Post-translationally, phosphorylation of Tyr-785 is required for grb2-binding.

Functionally, may mediate the control of various cellular processes by insulin. When phosphorylated by the insulin receptor binds specifically to various cellular proteins containing SH2 domains such as phosphatidylinositol 3-kinase p85 subunit or grb2. Activates phosphatidylinositol 3-kinase when bound to the regulatory p85 subunit. The sequence is that of Insulin receptor substrate 1-B (irs1-b) from Xenopus laevis (African clawed frog).